The following is a 463-amino-acid chain: Exodeoxyribonuclease 7 large subunit (463 aa).

The protein belongs to the XseA family. In terms of assembly, heterooligomer composed of large and small subunits.

It is found in the cytoplasm. It carries out the reaction Exonucleolytic cleavage in either 5'- to 3'- or 3'- to 5'-direction to yield nucleoside 5'-phosphates.. Its function is as follows. Bidirectionally degrades single-stranded DNA into large acid-insoluble oligonucleotides, which are then degraded further into small acid-soluble oligonucleotides. The protein is Exodeoxyribonuclease 7 large subunit of Bordetella bronchiseptica (strain ATCC BAA-588 / NCTC 13252 / RB50) (Alcaligenes bronchisepticus).